Here is a 412-residue protein sequence, read N- to C-terminus: Imidazolonepropionase (412 aa).

Positions 76 and 78 each coordinate Fe(3+). The Zn(2+) site is built by His-76 and His-78. 4-imidazolone-5-propanoate is bound by residues Arg-85, Tyr-148, and His-181. Tyr-148 provides a ligand contact to N-formimidoyl-L-glutamate. His-242 serves as a coordination point for Fe(3+). His-242 is a binding site for Zn(2+). Glu-245 lines the 4-imidazolone-5-propanoate pocket. Position 317 (Asp-317) interacts with Fe(3+). Asp-317 contributes to the Zn(2+) binding site. Residues Asn-319 and Gly-321 each coordinate N-formimidoyl-L-glutamate. Ser-322 contributes to the 4-imidazolone-5-propanoate binding site.

The protein belongs to the metallo-dependent hydrolases superfamily. HutI family. Requires Zn(2+) as cofactor. The cofactor is Fe(3+).

The protein localises to the cytoplasm. The catalysed reaction is 4-imidazolone-5-propanoate + H2O = N-formimidoyl-L-glutamate. Its pathway is amino-acid degradation; L-histidine degradation into L-glutamate; N-formimidoyl-L-glutamate from L-histidine: step 3/3. Functionally, catalyzes the hydrolytic cleavage of the carbon-nitrogen bond in imidazolone-5-propanoate to yield N-formimidoyl-L-glutamate. It is the third step in the universal histidine degradation pathway. This Staphylococcus saprophyticus subsp. saprophyticus (strain ATCC 15305 / DSM 20229 / NCIMB 8711 / NCTC 7292 / S-41) protein is Imidazolonepropionase.